The sequence spans 227 residues: Cytochrome c oxidase subunit 2 (227 aa).

Topologically, residues 1 to 14 are mitochondrial intermembrane; it reads MAYPLQLGFQDATS. The chain crosses the membrane as a helical span at residues 15-45; the sequence is PIMEELLHFHDHTLMIVFLISSLVLYIISLM. Over 46 to 59 the chain is Mitochondrial matrix; sequence LTTKLTHTSTMDAQ. A helical transmembrane segment spans residues 60–87; sequence EVETIWTILPAIILILIALPSLRILYMM. Residues 88–227 lie on the Mitochondrial intermembrane side of the membrane; the sequence is DEINNPSLTI…HFEKWSTSML (140 aa). 6 residues coordinate Cu cation: histidine 161, cysteine 196, glutamate 198, cysteine 200, histidine 204, and methionine 207. Glutamate 198 contacts Mg(2+).

The protein belongs to the cytochrome c oxidase subunit 2 family. Component of the cytochrome c oxidase (complex IV, CIV), a multisubunit enzyme composed of 14 subunits. The complex is composed of a catalytic core of 3 subunits MT-CO1, MT-CO2 and MT-CO3, encoded in the mitochondrial DNA, and 11 supernumerary subunits COX4I, COX5A, COX5B, COX6A, COX6B, COX6C, COX7A, COX7B, COX7C, COX8 and NDUFA4, which are encoded in the nuclear genome. The complex exists as a monomer or a dimer and forms supercomplexes (SCs) in the inner mitochondrial membrane with NADH-ubiquinone oxidoreductase (complex I, CI) and ubiquinol-cytochrome c oxidoreductase (cytochrome b-c1 complex, complex III, CIII), resulting in different assemblies (supercomplex SCI(1)III(2)IV(1) and megacomplex MCI(2)III(2)IV(2)). Found in a complex with TMEM177, COA6, COX18, COX20, SCO1 and SCO2. Interacts with TMEM177 in a COX20-dependent manner. Interacts with COX20. Interacts with COX16. Cu cation is required as a cofactor.

The protein localises to the mitochondrion inner membrane. The catalysed reaction is 4 Fe(II)-[cytochrome c] + O2 + 8 H(+)(in) = 4 Fe(III)-[cytochrome c] + 2 H2O + 4 H(+)(out). Functionally, component of the cytochrome c oxidase, the last enzyme in the mitochondrial electron transport chain which drives oxidative phosphorylation. The respiratory chain contains 3 multisubunit complexes succinate dehydrogenase (complex II, CII), ubiquinol-cytochrome c oxidoreductase (cytochrome b-c1 complex, complex III, CIII) and cytochrome c oxidase (complex IV, CIV), that cooperate to transfer electrons derived from NADH and succinate to molecular oxygen, creating an electrochemical gradient over the inner membrane that drives transmembrane transport and the ATP synthase. Cytochrome c oxidase is the component of the respiratory chain that catalyzes the reduction of oxygen to water. Electrons originating from reduced cytochrome c in the intermembrane space (IMS) are transferred via the dinuclear copper A center (CU(A)) of subunit 2 and heme A of subunit 1 to the active site in subunit 1, a binuclear center (BNC) formed by heme A3 and copper B (CU(B)). The BNC reduces molecular oxygen to 2 water molecules using 4 electrons from cytochrome c in the IMS and 4 protons from the mitochondrial matrix. The polypeptide is Cytochrome c oxidase subunit 2 (MT-CO2) (Rhinoceros unicornis (Greater Indian rhinoceros)).